The following is a 453-amino-acid chain: uncharacterized protein (453 aa).

Disordered regions lie at residues 183-210 and 428-453; these read GNGRSNPSKNNERGRTKAHNYKTRRSLS and PDSMQHPPTFSKNNTSSNPKSHQYSK. Positions 198–207 are enriched in basic residues; that stretch reads TKAHNYKTRR. A compositionally biased stretch (polar residues) spans 433-453; sequence HPPTFSKNNTSSNPKSHQYSK.

This is an uncharacterized protein from Saccharomyces cerevisiae (strain ATCC 204508 / S288c) (Baker's yeast).